Here is a 502-residue protein sequence, read N- to C-terminus: uncharacterized protein (502 aa).

3 stretches are compositionally biased toward low complexity: residues 1 to 10 (MQSTTNNNTN), 28 to 47 (SNRSAYRSASKSASRSNNLS), and 155 to 171 (NTEDTNDDNSNSQSVNS). 4 disordered regions span residues 1-57 (MQST…VISY), 155-181 (NTEDTNDDNSNSQSVNSRTDSDNLSAR), 212-362 (SLGN…TDKF), and 438-487 (TIDQ…TSNL). A compositionally biased stretch (polar residues) spans 212 to 230 (SLGNSERNSPDRPSTQGDS). Composition is skewed to low complexity over residues 242–290 (RNAS…SSRN) and 309–327 (SNKNSASRNSASRNSTSIK). Positions 339 to 348 (QTNKSKNQRG) are enriched in polar residues. Over residues 446–460 (TSDKNNSTKSNTKYN) the composition is skewed to low complexity. Polar residues predominate over residues 470-487 (SYGTSKRSHNRSSNTSNL).

It localises to the virion. This is an uncharacterized protein from Acanthamoeba polyphaga (Amoeba).